A 719-amino-acid chain; its full sequence is Forkhead box protein K1 (719 aa).

A2 bears the N-acetylalanine mark. The interaction with SIN3A and SIN3B stretch occupies residues 2–40 (AEVGEDSGARALLALRSAPCSPVLCAAAAAAAFPATTSP). A disordered region spans residues 35–67 (PATTSPPPPAQPPPGPPALPAEPGPGPVPSTVA). The span at 38-62 (TSPPPPAQPPPGPPALPAEPGPGPV) shows a compositional bias: pro residues. Residues 81 to 406 (AASVRQSPGP…PLSSRSAPAS (326 aa)) are required for interaction with FOXO4 and MEF2C. At S87 the chain carries Phosphoserine. One can recognise an FHA domain in the interval 109 to 161 (VTIGRNSSQGSVDLSMGLSSFISRRHLQLSFQEPHFYLRCLGKNGVFVDGAFQ). Omega-N-methylarginine occurs at positions 147 and 177. S199, S209, S225, and S229 each carry phosphoserine. Phosphothreonine is present on residues T231 and T233. A phosphoserine mark is found at S239, S243, S281, and S285. The segment at residues 291 to 386 (KPPYSYAQLI…EQAFRKRRQR (96 aa)) is a DNA-binding region (fork-head). Positions 399–443 (SSRSAPASPTHPGLMSPRSSGLQTPECLSREGSPIPHDPDLGSKL) are disordered. Phosphoserine occurs at positions 402 and 406. The residue at position 408 (T408) is a Phosphothreonine. S414 is modified (phosphoserine). T422 is modified (phosphothreonine). Phosphoserine occurs at positions 427, 431, and 445. The segment covering 665-685 (AANAAPTPAASTTTSASSSGE) has biased composition (low complexity). The disordered stretch occupies residues 665–719 (AANAAPTPAASTTTSASSSGEPEVKRSRVEEPGGTATTQPTAMAATGPQGPGTGE). Basic and acidic residues predominate over residues 686 to 695 (PEVKRSRVEE). Positions 696–712 (PGGTATTQPTAMAATGP) are enriched in low complexity.

Interacts with SIN3A and SIN3B (via PAH2) to form a complex which represses transcription. Component of SIN3A-, but not SIN3B-, containing multiprotein complexes. Interacts with FOXO4 and MEF2C; both interactions inhibit FOXO4 and MEF2C transactivation activity. Interacts (when phosphorylated) with YWHAE/14-3-3-epsilon; promotes sequestration in the cytoplasm and leads to impaired ability to bind DNA. Interacts with FHL2. Interacts with SRF. Interacts with DVL2 and DVL3; the interaction induces DVL2 nuclear translocation. Interacts with BAP1 (when phosphorylated). Accessory component of the polycomb repressive deubiquitinase (PR-DUB) complex, at least composed of BAP1, one of ASXL1, ASXL2 or (probably) ASXL3 and one of MBD5 or MBD6. The PR-DUB core associates with a number of accessory proteins, including FOXK1, FOXK2, KDM1B, HCFC1 and OGT. Phosphorylation by GSK3 (GSK3A or GSK3B) promotes interaction with YWHAE/14-3-3-epsilon and retention in the cytoplasm. In response to mTORC1 signaling, phosphorylation by GSK3 is prevented, leading to translocation to the nucleus. Expressed in tissues and cells in which the myoglobin gene is transcriptionally active including cardiac and skeletal myocytes, brain and kidney. In the adult brain, expressed in the piriform cortex and the indusium griseum. In the hippocampus, expression is localized to the dentate gyrus and CA3 area. In the cerebellum, expression is confined to the Purkinje cell layer. Present in neuroretinal cells: expressed in rod bipolar cells, amacrine cells and ganglion cells (at protein level).

The protein resides in the nucleus. It localises to the cytoplasm. Transcriptional regulator involved in different processes such as glucose metabolism, aerobic glycolysis, muscle cell differentiation and autophagy. Recognizes and binds the forkhead DNA sequence motif (5'-GTAAACA-3') and can both act as a transcription activator or repressor, depending on the context. Together with FOXK2, acts as a key regulator of metabolic reprogramming towards aerobic glycolysis, a process in which glucose is converted to lactate in the presence of oxygen. Acts by promoting expression of enzymes for glycolysis (such as hexokinase-2 (HK2), phosphofructokinase, pyruvate kinase (PKLR) and lactate dehydrogenase), while suppressing further oxidation of pyruvate in the mitochondria by up-regulating pyruvate dehydrogenase kinases PDK1 and PDK4. Probably plays a role in gluconeogenesis during overnight fasting, when lactate from white adipose tissue and muscle is the main substrate. Involved in mTORC1-mediated metabolic reprogramming: in response to mTORC1 signaling, translocates into the nucleus and regulates the expression of genes associated with glycolysis and downstream anabolic pathways, such as HIF1A, thereby regulating glucose metabolism. Together with FOXK2, acts as a negative regulator of autophagy in skeletal muscle: in response to starvation, enters the nucleus, binds the promoters of autophagy genes and represses their expression, preventing proteolysis of skeletal muscle proteins. Acts as a transcriptional regulator of the myogenic progenitor cell population in skeletal muscle. Binds to the upstream enhancer region (CCAC box) of myoglobin (MB) gene, regulating the myogenic progenitor cell population. Promotes muscle progenitor cell proliferation by repressing the transcriptional activity of FOXO4, thereby inhibiting myogenic differentiation. Involved in remodeling processes of adult muscles that occur in response to physiological stimuli. Required to correct temporal orchestration of molecular and cellular events necessary for muscle repair. Represses myogenic differentiation by inhibiting MEFC activity. Positively regulates Wnt/beta-catenin signaling by translocating DVL into the nucleus. Reduces virus replication, probably by binding the interferon stimulated response element (ISRE) to promote antiviral gene expression. Accessory component of the polycomb repressive deubiquitinase (PR-DUB) complex; recruits the PR-DUB complex to specific FOXK1-bound genes. This Mus musculus (Mouse) protein is Forkhead box protein K1.